Reading from the N-terminus, the 183-residue chain is Ras-like protein (183 aa).

10–17 (GAGGVGKS) is a GTP binding site. The Effector region motif lies at 32 to 40 (YDPTIEDSY). GTP is bound by residues 57 to 61 (DTAGQ) and 116 to 119 (NKCD).

Belongs to the small GTPase superfamily. Ras family.

The protein localises to the cell membrane. It carries out the reaction GTP + H2O = GDP + phosphate + H(+). With respect to regulation, alternates between an inactive form bound to GDP and an active form bound to GTP. Activated by a guanine nucleotide-exchange factor (GEF) and inactivated by a GTPase-activating protein (GAP). Its function is as follows. Ras proteins bind GDP/GTP and possess intrinsic GTPase activity. This Carassius auratus (Goldfish) protein is Ras-like protein.